The primary structure comprises 210 residues: MWTLGRRAVAGLLASPSPAQAQTLTRVPRPAELAPLCGRRGLRTDIDATCTPRRASSNQRGLNQIWNVKKQSVYLMNLRKSGTLGHPGSLDETTYERLAEETLDSLAEFFEDLADKPYTFEDYDVSFGSGVLTVKLGGDLGTYVINKQTPNKQIWLSSPSSGPKRYDWTGKNWVYSHDGVSLHELLAAELTKALKTKLDLSSLAYSGKDA.

Residues 1 to 41 (MWTLGRRAVAGLLASPSPAQAQTLTRVPRPAELAPLCGRRG) constitute a mitochondrion transit peptide.

It belongs to the frataxin family. In terms of assembly, component of the mitochondrial core iron-sulfur cluster (ISC) complex composed of NFS1, LYRM4, NDUFAB1, ISCU, FXN, and FDX2; this complex is a heterohexamer containing two copies of each monomer. Homodimer. Monomer (probable predominant form). Oligomer. Monomers and polymeric aggregates of &gt;1 MDa have been isolated from mitochondria. A small fraction of heterologous overexpressed recombinant frataxin forms high-molecular weight aggregates that incorporate iron. Interacts with LYRM4. Interacts (via ferrous form) with ISCU; the interaction is possible when both are bound to the dimeric form of the cysteine desulfurase complex (NFS1:LYRM4) and the interaction enhances FXN interaction to the dimeric form of the cysteine desulfurase complex (NFS1:LYRM4). Interacts with FECH; one iron-bound FXN monomer seems to interact with a FECH homodimer. Interacts with SDHA and SDHB. Interacts with ACO2; the interaction is dependent on citrate. Interacts with HSPA9. As to quaternary structure, interacts with ACO1. Interacts with ISCU (cytoplasmic form). Processed in two steps by mitochondrial processing peptidase (MPP). MPP first cleaves the precursor to intermediate form and subsequently converts the intermediate to yield frataxin mature form (frataxin(81-210)) which is the predominant form. The additional forms, frataxin(56-210) and frataxin(78-210), seem to be produced when the normal maturation process is impaired; their physiological relevance is unsure. In terms of tissue distribution, expressed in the heart, peripheral blood lymphocytes and dermal fibroblasts.

The protein resides in the mitochondrion. Its subcellular location is the cytoplasm. It is found in the cytosol. The enzyme catalyses 4 Fe(2+) + O2 + 4 H(+) = 4 Fe(3+) + 2 H2O. Its function is as follows. Functions as an activator of persulfide transfer to the scaffoding protein ISCU as component of the core iron-sulfur cluster (ISC) assembly complex and participates to the [2Fe-2S] cluster assembly. Accelerates sulfur transfer from NFS1 persulfide intermediate to ISCU and to small thiols such as L-cysteine and glutathione leading to persulfuration of these thiols and ultimately sulfide release. Binds ferrous ion and is released from FXN upon the addition of both L-cysteine and reduced FDX2 during [2Fe-2S] cluster assembly. The core iron-sulfur cluster (ISC) assembly complex is involved in the de novo synthesis of a [2Fe-2S] cluster, the first step of the mitochondrial iron-sulfur protein biogenesis. This process is initiated by the cysteine desulfurase complex (NFS1:LYRM4:NDUFAB1) that produces persulfide which is delivered on the scaffold protein ISCU in a FXN-dependent manner. Then this complex is stabilized by FDX2 which provides reducing equivalents to accomplish the [2Fe-2S] cluster assembly. Finally, the [2Fe-2S] cluster is transferred from ISCU to chaperone proteins, including HSCB, HSPA9 and GLRX5. May play a role in the protection against iron-catalyzed oxidative stress through its ability to catalyze the oxidation of Fe(2+) to Fe(3+); the oligomeric form but not the monomeric form has in vitro ferroxidase activity. May be able to store large amounts of iron in the form of a ferrihydrite mineral by oligomerization; however, the physiological relevance is unsure as reports are conflicting and the function has only been shown using heterologous overexpression systems. May function as an iron chaperone protein that protects the aconitase [4Fe-4S]2+ cluster from disassembly and promotes enzyme reactivation. May play a role as a high affinity iron binding partner for FECH that is capable of both delivering iron to ferrochelatase and mediating the terminal step in mitochondrial heme biosynthesis. Modulates the RNA-binding activity of ACO1. May be involved in the cytoplasmic iron-sulfur protein biogenesis. May contribute to oxidative stress resistance and overall cell survival. The sequence is that of Frataxin, mitochondrial from Homo sapiens (Human).